A 471-amino-acid chain; its full sequence is Argininosuccinate lyase (471 aa).

This sequence belongs to the lyase 1 family. Argininosuccinate lyase subfamily.

It localises to the cytoplasm. The catalysed reaction is 2-(N(omega)-L-arginino)succinate = fumarate + L-arginine. It participates in amino-acid biosynthesis; L-arginine biosynthesis; L-arginine from L-ornithine and carbamoyl phosphate: step 3/3. The protein is Argininosuccinate lyase of Parasynechococcus marenigrum (strain WH8102).